Here is a 289-residue protein sequence, read N- to C-terminus: uncharacterized protein (289 aa).

This is an uncharacterized protein from Dictyostelium discoideum (Social amoeba).